A 447-amino-acid polypeptide reads, in one-letter code: Argininosuccinate synthase (447 aa).

Residues 17-25 (AFSGGLDTS) and alanine 43 contribute to the ATP site. Residue tyrosine 99 participates in L-citrulline binding. ATP is bound by residues glycine 129 and threonine 131. 3 residues coordinate L-aspartate: threonine 131, asparagine 135, and aspartate 136. Asparagine 135 contributes to the L-citrulline binding site. Aspartate 136 contributes to the ATP binding site. The L-citrulline site is built by arginine 139 and serine 192. Aspartate 194 is an ATP binding site. Residues threonine 201, glutamate 203, and glutamate 280 each coordinate L-citrulline.

This sequence belongs to the argininosuccinate synthase family. Type 2 subfamily. Homotetramer.

It is found in the cytoplasm. It carries out the reaction L-citrulline + L-aspartate + ATP = 2-(N(omega)-L-arginino)succinate + AMP + diphosphate + H(+). The protein operates within amino-acid biosynthesis; L-arginine biosynthesis; L-arginine from L-ornithine and carbamoyl phosphate: step 2/3. The protein is Argininosuccinate synthase of Salmonella agona (strain SL483).